We begin with the raw amino-acid sequence, 307 residues long: Protein PROCA1 (307 aa).

Disordered regions lie at residues 134–155 (NHLSPSARPPDPNTGSATEVPD) and 183–307 (RKEK…PNLS). The segment covering 200 to 214 (LKKKAKGKLTKKKTP) has biased composition (basic residues). Residues 216 to 228 (KSESSPADLSQSV) are compositionally biased toward polar residues. S220 is subject to Phosphoserine. Residues 235-248 (PESSPESPGGLESE) show a composition bias toward low complexity. S250, S259, S260, S298, and S307 each carry phosphoserine. Residues 250-260 (SCERGKERPSS) are compositionally biased toward basic and acidic residues.

This sequence belongs to the PROCA1 family.

This is Protein PROCA1 (Proca1) from Mus musculus (Mouse).